Here is a 147-residue protein sequence, read N- to C-terminus: Hemoglobin subunit beta (147 aa).

Residue V2 is modified to N-acetylvaline. Residues 3–147 enclose the Globin domain; sequence HLTGEEKSAV…VANALAHKYH (145 aa). T13 carries the post-translational modification Phosphothreonine. S45 carries the post-translational modification Phosphoserine. K60 bears the N6-acetyllysine mark. H64 contacts heme b. Residue K83 is modified to N6-acetyllysine. H93 provides a ligand contact to heme b. The residue at position 94 (C94) is an S-nitrosocysteine. The residue at position 145 (K145) is an N6-acetyllysine.

This sequence belongs to the globin family. Heterotetramer of two alpha chains and two beta chains. As to expression, red blood cells.

In terms of biological role, involved in oxygen transport from the lung to the various peripheral tissues. The chain is Hemoglobin subunit beta (HBB) from Callithrix jacchus (White-tufted-ear marmoset).